The chain runs to 235 residues: Carbonic anhydrase 1 (235 aa).

The Alpha-carbonic anhydrase domain maps to Gly1–Phe235. The Proton donor/acceptor role is filled by His40. Residues His69, His71, and His94 each contribute to the Zn(2+) site. Substrate contacts are provided by residues Thr174 and Thr174 to His175.

This sequence belongs to the alpha-carbonic anhydrase family. Requires Zn(2+) as cofactor.

The protein resides in the cytoplasm. It catalyses the reaction hydrogencarbonate + H(+) = CO2 + H2O. It carries out the reaction urea = cyanamide + H2O. Inhibited by acetazolamide. Functionally, catalyzes the reversible hydration of carbon dioxide. Can hydrate cyanamide to urea. This chain is Carbonic anhydrase 1 (CA1), found in Oryctolagus cuniculus (Rabbit).